Consider the following 202-residue polypeptide: Outer-membrane lipoprotein LolB (202 aa).

Positions 1 to 18 (MFRRTYFWLMLLPLFMVG) are cleaved as a signal peptide. C19 carries N-palmitoyl cysteine lipidation. C19 is lipidated: S-diacylglycerol cysteine.

This sequence belongs to the LolB family. As to quaternary structure, monomer.

It localises to the cell outer membrane. In terms of biological role, plays a critical role in the incorporation of lipoproteins in the outer membrane after they are released by the LolA protein. The chain is Outer-membrane lipoprotein LolB from Vibrio vulnificus (strain YJ016).